Here is a 363-residue protein sequence, read N- to C-terminus: Phosphoserine aminotransferase (363 aa).

Residue arginine 42 coordinates L-glutamate. Positions 105, 155, 175, and 198 each coordinate pyridoxal 5'-phosphate. An N6-(pyridoxal phosphate)lysine modification is found at lysine 199. 240–241 contacts pyridoxal 5'-phosphate; that stretch reads NT.

This sequence belongs to the class-V pyridoxal-phosphate-dependent aminotransferase family. SerC subfamily. As to quaternary structure, homodimer. Pyridoxal 5'-phosphate is required as a cofactor.

The protein localises to the cytoplasm. The catalysed reaction is O-phospho-L-serine + 2-oxoglutarate = 3-phosphooxypyruvate + L-glutamate. The enzyme catalyses 4-(phosphooxy)-L-threonine + 2-oxoglutarate = (R)-3-hydroxy-2-oxo-4-phosphooxybutanoate + L-glutamate. It functions in the pathway amino-acid biosynthesis; L-serine biosynthesis; L-serine from 3-phospho-D-glycerate: step 2/3. Its pathway is cofactor biosynthesis; pyridoxine 5'-phosphate biosynthesis; pyridoxine 5'-phosphate from D-erythrose 4-phosphate: step 3/5. Catalyzes the reversible conversion of 3-phosphohydroxypyruvate to phosphoserine and of 3-hydroxy-2-oxo-4-phosphonooxybutanoate to phosphohydroxythreonine. This chain is Phosphoserine aminotransferase, found in Janthinobacterium sp. (strain Marseille) (Minibacterium massiliensis).